The chain runs to 414 residues: Ornithine aminotransferase (414 aa).

A disulfide bridge links Cys154 with Cys163. Lys262 is modified (N6-(pyridoxal phosphate)lysine).

This sequence belongs to the class-III pyridoxal-phosphate-dependent aminotransferase family. Homodimer. Requires pyridoxal 5'-phosphate as cofactor. Post-translationally, the disulfide bond between Cys-154 and Cys-163 is reduced by TRX1 which increases OAT catalytic activity.

The protein resides in the cytoplasm. The enzyme catalyses a 2-oxocarboxylate + L-ornithine = L-glutamate 5-semialdehyde + an L-alpha-amino acid. It carries out the reaction L-ornithine + 2-oxoglutarate = L-glutamate 5-semialdehyde + L-glutamate. It functions in the pathway amino-acid biosynthesis; L-proline biosynthesis; L-glutamate 5-semialdehyde from L-ornithine: step 1/1. Unlike for mammalian OATs, activity is increased by TRX1-mediated reduction of the disulfide bond between Cys-154 and Cys-163. Binding to TRX1 may also induce conformational changes that facilitate substrate binding. Functionally, the enzyme has a very narrow substrate specificity and can only catalyze the transamination of alpha-ketoglutarate with ornithine or N-acetylornithine and, to a lesser extent, of glutamate-5-semialdehyde with glutamate and alanine. The protein is Ornithine aminotransferase of Plasmodium falciparum (isolate 3D7).